The following is a 165-amino-acid chain: Phosphopantetheine adenylyltransferase (165 aa).

Thr11 lines the substrate pocket. ATP is bound by residues 11–12 (TF) and His19. Substrate-binding residues include Lys43, Val75, and Arg89. Residues 90–92 (GLR), Glu100, and 125–131 (YQFISST) each bind ATP.

Belongs to the bacterial CoaD family. As to quaternary structure, homohexamer. Mg(2+) serves as cofactor.

The protein localises to the cytoplasm. The catalysed reaction is (R)-4'-phosphopantetheine + ATP + H(+) = 3'-dephospho-CoA + diphosphate. It participates in cofactor biosynthesis; coenzyme A biosynthesis; CoA from (R)-pantothenate: step 4/5. Reversibly transfers an adenylyl group from ATP to 4'-phosphopantetheine, yielding dephospho-CoA (dPCoA) and pyrophosphate. The protein is Phosphopantetheine adenylyltransferase of Acidovorax ebreus (strain TPSY) (Diaphorobacter sp. (strain TPSY)).